The primary structure comprises 249 residues: Putative type I specificity subunit S.MpnORF615P (249 aa).

This sequence belongs to the type-I restriction system S methylase family. In terms of assembly, the methyltransferase is composed of M and S polypeptides.

Its function is as follows. The specificity (S) subunit of a type I methyltransferase (MTase); this subunit dictates DNA sequence specificity. The single R subunit has multiple frameshifts and is probably not expressed. This chain is Putative type I specificity subunit S.MpnORF615P, found in Mycoplasma pneumoniae (strain ATCC 29342 / M129 / Subtype 1) (Mycoplasmoides pneumoniae).